The following is a 116-amino-acid chain: NADH-ubiquinone oxidoreductase chain 3 (116 aa).

A run of 3 helical transmembrane segments spans residues 3–23, 56–76, and 87–107; these read LITT…TISF, FFLI…LLPL, and LTLI…IYEW.

The protein belongs to the complex I subunit 3 family.

It localises to the mitochondrion membrane. The catalysed reaction is a ubiquinone + NADH + 5 H(+)(in) = a ubiquinol + NAD(+) + 4 H(+)(out). In terms of biological role, core subunit of the mitochondrial membrane respiratory chain NADH dehydrogenase (Complex I) that is believed to belong to the minimal assembly required for catalysis. Complex I functions in the transfer of electrons from NADH to the respiratory chain. The immediate electron acceptor for the enzyme is believed to be ubiquinone. The polypeptide is NADH-ubiquinone oxidoreductase chain 3 (MT-ND3) (Oncorhynchus mykiss (Rainbow trout)).